The chain runs to 301 residues: Probable alpha-L-glutamate ligase (301 aa).

The 184-residue stretch at 104 to 287 (LQLLARKGIG…VATKVIEFIE (184 aa)) folds into the ATP-grasp domain. ATP contacts are provided by residues K141, 178–179 (EF), D187, and 211–213 (RSN). Positions 248, 260, and 262 each coordinate Mg(2+). 3 residues coordinate Mn(2+): D248, E260, and N262.

Belongs to the RimK family. Requires Mg(2+) as cofactor. It depends on Mn(2+) as a cofactor.

The polypeptide is Probable alpha-L-glutamate ligase (Nitrosococcus oceani (strain ATCC 19707 / BCRC 17464 / JCM 30415 / NCIMB 11848 / C-107)).